The following is a 90-amino-acid chain: uncharacterized protein (90 aa).

This is an uncharacterized protein from Treponema pallidum (strain Nichols).